Consider the following 308-residue polypeptide: Lipoyl synthase 2 (308 aa).

Residues Cys49, Cys54, Cys60, Cys75, Cys79, Cys82, and Ser300 each coordinate [4Fe-4S] cluster. A Radical SAM core domain is found at 61–289; it reads YASGTATFLL…KRIAEGLGFK (229 aa).

Belongs to the radical SAM superfamily. Lipoyl synthase family. Requires [4Fe-4S] cluster as cofactor.

It is found in the cytoplasm. It carries out the reaction [[Fe-S] cluster scaffold protein carrying a second [4Fe-4S](2+) cluster] + N(6)-octanoyl-L-lysyl-[protein] + 2 oxidized [2Fe-2S]-[ferredoxin] + 2 S-adenosyl-L-methionine + 4 H(+) = [[Fe-S] cluster scaffold protein] + N(6)-[(R)-dihydrolipoyl]-L-lysyl-[protein] + 4 Fe(3+) + 2 hydrogen sulfide + 2 5'-deoxyadenosine + 2 L-methionine + 2 reduced [2Fe-2S]-[ferredoxin]. Its pathway is protein modification; protein lipoylation via endogenous pathway; protein N(6)-(lipoyl)lysine from octanoyl-[acyl-carrier-protein]: step 2/2. Its function is as follows. Catalyzes the radical-mediated insertion of two sulfur atoms into the C-6 and C-8 positions of the octanoyl moiety bound to the lipoyl domains of lipoate-dependent enzymes, thereby converting the octanoylated domains into lipoylated derivatives. The polypeptide is Lipoyl synthase 2 (Prochlorococcus marinus (strain SARG / CCMP1375 / SS120)).